The primary structure comprises 157 residues: Transcription elongation factor GreA (157 aa).

This sequence belongs to the GreA/GreB family.

Its function is as follows. Necessary for efficient RNA polymerase transcription elongation past template-encoded arresting sites. The arresting sites in DNA have the property of trapping a certain fraction of elongating RNA polymerases that pass through, resulting in locked ternary complexes. Cleavage of the nascent transcript by cleavage factors such as GreA or GreB allows the resumption of elongation from the new 3'terminus. GreA releases sequences of 2 to 3 nucleotides. This is Transcription elongation factor GreA from Hyphomonas neptunium (strain ATCC 15444).